The chain runs to 345 residues: GDSL esterase/lipase At1g23500 (345 aa).

The N-terminal stretch at 1-24 is a signal peptide; the sequence is MNFSLLSTMLMALSSVCLFFVGYA. The Nucleophile role is filled by Ser42. A glycan (N-linked (GlcNAc...) asparagine) is linked at Asn103. Catalysis depends on residues Asp320 and His323.

The protein belongs to the 'GDSL' lipolytic enzyme family.

Its subcellular location is the secreted. The protein is GDSL esterase/lipase At1g23500 of Arabidopsis thaliana (Mouse-ear cress).